The primary structure comprises 168 residues: TREKPFTCTECGKGFSDKSNLRSHQRTHTREKPFTCTECGKSFSQKIGLHNHLKCHTGEKPFMCTECGKSFSNKSNLHTHRKIHTGERPYICTECGKTFPRKKNLQSHQTVHTQEKPFTCSECGKCFSQKKNLHTHQKIHTGEKPFKCNECGQAFLRKRNLLSHERIH.

C2H2-type zinc fingers lie at residues 6-28, 34-56, 62-84, 90-112, 118-140, and 146-168; these read FTCT…QRTH, FTCT…LKCH, FMCT…RKIH, YICT…QTVH, FTCS…QKIH, and FKCN…ERIH.

It belongs to the krueppel C2H2-type zinc-finger protein family.

Its subcellular location is the nucleus. In terms of biological role, may be involved in transcriptional regulation. The sequence is that of Gastrula zinc finger protein XlCGF7.1 from Xenopus laevis (African clawed frog).